A 123-amino-acid polypeptide reads, in one-letter code: Small ribosomal subunit protein uS12 (123 aa).

The disordered stretch occupies residues 1–29; that stretch reads MPTINQLVRKGRVPQKAKSKVPAMEQNPQ. A compositionally biased stretch (basic residues) spans 9–19; sequence RKGRVPQKAKS. Residue Asp89 is modified to 3-methylthioaspartic acid.

This sequence belongs to the universal ribosomal protein uS12 family. In terms of assembly, part of the 30S ribosomal subunit. Contacts proteins S8 and S17. May interact with IF1 in the 30S initiation complex.

In terms of biological role, with S4 and S5 plays an important role in translational accuracy. Functionally, interacts with and stabilizes bases of the 16S rRNA that are involved in tRNA selection in the A site and with the mRNA backbone. Located at the interface of the 30S and 50S subunits, it traverses the body of the 30S subunit contacting proteins on the other side and probably holding the rRNA structure together. The combined cluster of proteins S8, S12 and S17 appears to hold together the shoulder and platform of the 30S subunit. This Erythrobacter litoralis (strain HTCC2594) protein is Small ribosomal subunit protein uS12.